The following is an 855-amino-acid chain: E3 ubiquitin-protein ligase TRIM71 (855 aa).

Ala-2 is modified (N-acetylalanine). Residues 12 to 94 (CLLCKEMCGS…ALKLRCPVCD (83 aa)) form an RING-type zinc finger. The segment covering 26–42 (SSSSSASSSSSQTSTSS) has biased composition (low complexity). Disordered regions lie at residues 26 to 48 (SSSS…GGGP) and 126 to 177 (ADEP…SPGS). A compositionally biased stretch (gly residues) spans 135–145 (RAGGGPGGAGG). The span at 147-157 (SNHRHHAHHPA) shows a compositional bias: basic residues. The segment at 181-228 (RRPHGCSSCDEGNAASSRCLDCQEHLCDNCVRAHQRVRLTKDHYIERG) adopts a B box-type 1; atypical zinc-finger fold. The B box-type 2 zinc finger occupies 260 to 301 (ERLGFCQHHDDEVLHLYCDTCSVPICRECTLGRHGGHSFAYL). Residues Cys-265, His-268, Cys-288, and His-293 each contribute to the Zn(2+) site. Positions 378–414 (QVKAKSLYLQVEKLRQNLNKLESTISAVQQVLEEGRA) form a coiled coil. A Filamin repeat occupies 466-567 (SSGAFAPLTK…IENSPFKVVV (102 aa)). 6 NHL repeats span residues 580 to 623 (VLSF…FKPC), 627 to 670 (HHKF…FTFE), 674 to 717 (LLKF…FGPD), 721 to 764 (LNKY…IHPD), 768 to 811 (ARFL…FEAN), and 815 to 855 (LCKF…ILIF).

Belongs to the TRIM/RBCC family. Interacts (via NHL repeats) with AGO2; the interaction increases in presence of RNA. Interacts with HSP90AA1. Interacts (via NHL repeats) with MOV10, PABPC1, PUM1, PUM2, STAU2, XRN1 and XRN2 in an RNA-dependent manner. Interacts with SHCBP1; leading to enhance its stability. In terms of processing, autoubiquitinated.

It localises to the cytoplasm. The protein localises to the P-body. It catalyses the reaction S-ubiquitinyl-[E2 ubiquitin-conjugating enzyme]-L-cysteine + [acceptor protein]-L-lysine = [E2 ubiquitin-conjugating enzyme]-L-cysteine + N(6)-ubiquitinyl-[acceptor protein]-L-lysine.. It participates in protein modification; protein ubiquitination. In terms of biological role, E3 ubiquitin-protein ligase that cooperates with the microRNAs (miRNAs) machinery and promotes embryonic stem cells proliferation and maintenance. Binds to miRNAs and associates with AGO2, participating in post-transcriptional repression of transcripts such as CDKN1A. In addition, participates in post-transcriptional mRNA repression in a miRNA independent mechanism. Facilitates the G1-S transition to promote rapid embryonic stem cell self-renewal by repressing CDKN1A expression. Required to maintain proliferation and prevent premature differentiation of neural progenitor cells during early neural development: positively regulates FGF signaling by controlling the stability of SHCBP1. Specific regulator of miRNA biogenesis. Binds to miRNA MIR29A hairpin and postranscriptionally modulates MIR29A levels, which indirectly regulates TET proteins expression. This Rattus norvegicus (Rat) protein is E3 ubiquitin-protein ligase TRIM71 (Trim71).